Consider the following 572-residue polypeptide: O-fucosyltransferase 16 (572 aa).

A helical; Signal-anchor for type II membrane protein transmembrane segment spans residues 17 to 37 (LLPLVIAVSLSLLILFAFLSF). N-linked (GlcNAc...) asparagine glycans are attached at residues N92 and N136. Residue 274 to 276 (HLR) participates in substrate binding. 2 N-linked (GlcNAc...) asparagine glycosylation sites follow: N446 and N506. The segment at 498 to 572 (ESRKLGKKNK…EPELEAMLSD (75 aa)) is disordered. The span at 521–541 (DQTEEDDPDWSEPDYEEEQSD) shows a compositional bias: acidic residues. The N-linked (GlcNAc...) asparagine glycan is linked to N549. Residues 554 to 566 (DYDDPSTSDEPEL) are compositionally biased toward acidic residues.

The protein belongs to the glycosyltransferase GT106 family.

It localises to the membrane. The protein operates within glycan metabolism. The polypeptide is O-fucosyltransferase 16 (Arabidopsis thaliana (Mouse-ear cress)).